The chain runs to 593 residues: Bifunctional purine biosynthesis protein ATIC (593 aa).

In terms of domain architecture, MGS-like spans 1–147 (MAARQQLALL…KNHARVTVVC (147 aa)). The tract at residues 1-199 (MAARQQLALL…ISDYFRKEYS (199 aa)) is IMP cyclohydrolase. IMP-binding positions include 13–15 (SEK), 35–38 (SGGT), 65–68 (RVKT), 102–103 (CN), and 126–127 (DI). Residue K138 is the Proton donor/acceptor; for FAICAR cyclization activity of the active site. K200 is modified (N6-acetyllysine). Positions 200 to 593 (KGVSQLPLRY…IHTNLRLFHH (394 aa)) are AICAR formyltransferase. 5-amino-1-(5-phospho-beta-D-ribosyl)imidazole-4-carboxamide contacts are provided by residues 208 to 209 (RY), H268, G317, D340, N432, and R452. Residue H268 is the Proton acceptor; for AICAR formyltransferase activity of the active site. I453 is a (6R)-10-formyltetrahydrofolate binding site. F542 lines the 5-amino-1-(5-phospho-beta-D-ribosyl)imidazole-4-carboxamide pocket. (6R)-10-formyltetrahydrofolate is bound by residues D547 and 566-567 (SA). Residue R589 participates in 5-amino-1-(5-phospho-beta-D-ribosyl)imidazole-4-carboxamide binding.

It belongs to the PurH family. In terms of assembly, homodimer. Associates with internalized INSR complexes on Golgi/endosomal membranes. Interacts with INSR; ATIC together with PRKAA2/AMPK2 and HACD3/PTPLAD1 is proposed to be part of a signaling network regulating INSR autophosphorylation and endocytosis.

It localises to the cytoplasm. Its subcellular location is the cytosol. The catalysed reaction is (6R)-10-formyltetrahydrofolate + 5-amino-1-(5-phospho-beta-D-ribosyl)imidazole-4-carboxamide = 5-formamido-1-(5-phospho-D-ribosyl)imidazole-4-carboxamide + (6S)-5,6,7,8-tetrahydrofolate. The enzyme catalyses 10-formyldihydrofolate + 5-amino-1-(5-phospho-beta-D-ribosyl)imidazole-4-carboxamide = 5-formamido-1-(5-phospho-D-ribosyl)imidazole-4-carboxamide + 7,8-dihydrofolate. It catalyses the reaction IMP + H2O = 5-formamido-1-(5-phospho-D-ribosyl)imidazole-4-carboxamide. It functions in the pathway purine metabolism; IMP biosynthesis via de novo pathway; 5-formamido-1-(5-phospho-D-ribosyl)imidazole-4-carboxamide from 5-amino-1-(5-phospho-D-ribosyl)imidazole-4-carboxamide (10-formyl THF route): step 1/1. It participates in purine metabolism; IMP biosynthesis via de novo pathway; IMP from 5-formamido-1-(5-phospho-D-ribosyl)imidazole-4-carboxamide: step 1/1. Its activity is regulated as follows. AMP and XMP inhibit AICAR formyltransferase activity. AICAR formyltransferase activity is competitively inhibited by 2-[5-hydroxy-3-methyl-1-(2-methyl-4-sulfo-phenyl)-1H-pyrazol-4-ylazo]-4-sulfo-benzoic acid (326203-A). FAICAR cyclization is competitively inhibited by 1,5-dihydroimidazo[4,5-c][1,2,6]thiadiazin-4(3H)-one-2,2-dioxide and the corresponding nucleoside and nucleoside monophosphate. Functionally, bifunctional enzyme that catalyzes the last two steps of purine biosynthesis. Acts as a transformylase that incorporates a formyl group to the AMP analog AICAR (5-amino-1-(5-phospho-beta-D-ribosyl)imidazole-4-carboxamide) to produce the intermediate formyl-AICAR (FAICAR). Can use both 10-formyldihydrofolate and 10-formyltetrahydrofolate as the formyl donor in this reaction. Also catalyzes the cyclization of FAICAR to inosine monophosphate (IMP). Promotes insulin receptor/INSR autophosphorylation and is involved in INSR internalization. This chain is Bifunctional purine biosynthesis protein ATIC (ATIC), found in Gallus gallus (Chicken).